Here is a 130-residue protein sequence, read N- to C-terminus: Small ribosomal subunit protein uS8 (130 aa).

It belongs to the universal ribosomal protein uS8 family. Part of the 30S ribosomal subunit. Contacts proteins S5 and S12.

Functionally, one of the primary rRNA binding proteins, it binds directly to 16S rRNA central domain where it helps coordinate assembly of the platform of the 30S subunit. The polypeptide is Small ribosomal subunit protein uS8 (Pseudoalteromonas atlantica (strain T6c / ATCC BAA-1087)).